We begin with the raw amino-acid sequence, 1027 residues long: LLGL scribble cell polarity complex component 2 (1027 aa).

WD repeat units lie at residues serine 36–leucine 69, valine 76–phenylalanine 117, valine 132–isoleucine 169, alanine 193–phenylalanine 227, leucine 233–proline 268, alanine 282–threonine 324, valine 332–leucine 366, threonine 388–serine 464, glutamine 508–valine 583, and threonine 592–serine 653. At serine 653 the chain carries Phosphoserine. A compositionally biased stretch (basic residues) spans phenylalanine 654–proline 669. The disordered stretch occupies residues phenylalanine 654–alanine 678. WD repeat units follow at residues valine 715–glutamine 771, glycine 780–lysine 832, leucine 837–serine 890, and valine 904–threonine 927. A disordered region spans residues threonine 940–valine 981. The segment covering lysine 957–glutamine 970 has biased composition (polar residues). Phosphoserine occurs at positions 971 and 1022.

It belongs to the WD repeat L(2)GL family. As to quaternary structure, interacts with GPSM2/LGN, PRKCI/aPKC and PARD6B/Par-6. The complex is enhanced during mitosis. Interacts with DCAF1. Phosphorylated at Ser-653 by PRKCI. Phosphorylation is enhanced during cell polarization induced by calcium. Phosphorylation may occur during the cell-cell contact-induced cell polarization and may contribute to the segregation of LLGL2 from the PRKCI/aPKC and PARD6B/Par-6 complex.

Its subcellular location is the cytoplasm. Functionally, part of a complex with GPSM2/LGN, PRKCI/aPKC and PARD6B/Par-6, which may ensure the correct organization and orientation of bipolar spindles for normal cell division. This complex plays roles in the initial phase of the establishment of epithelial cell polarity. The sequence is that of LLGL scribble cell polarity complex component 2 (Llgl2) from Mus musculus (Mouse).